Here is a 58-residue protein sequence, read N- to C-terminus: Conotoxin Im5.4 (58 aa).

The N-terminal stretch at 1-18 (MRCLPVVVFLLLLLSAAA) is a signal peptide. Residues 19 to 28 (APGVGSKTER) constitute a propeptide that is removed on maturation.

Belongs to the conotoxin T superfamily. Post-translationally, contains 2 disulfide bonds that can be either 'C1-C3, C2-C4' or 'C1-C4, C2-C3', since these disulfide connectivities have been observed for conotoxins with cysteine framework V (for examples, see AC P0DQQ7 and AC P81755). Expressed by the venom duct.

The protein localises to the secreted. Probable neurotoxin. The sequence is that of Conotoxin Im5.4 from Conus imperialis (Imperial cone).